The sequence spans 260 residues: Putative nudix hydrolase 6 (260 aa).

Residues 113-257 enclose the Nudix hydrolase domain; it reads PNHAADPIVS…SHFIDLLKES (145 aa). The Nudix box signature appears at 148–170; it reads GMVDAGEHVSQTLRREFAEEAMH. Residues Glu163 and Glu167 each coordinate Mg(2+).

The protein belongs to the Nudix hydrolase family. Mg(2+) serves as cofactor. Mn(2+) is required as a cofactor.

Probably mediates the hydrolysis of some nucleoside diphosphate derivatives. The chain is Putative nudix hydrolase 6 (ndx-6) from Caenorhabditis elegans.